The chain runs to 1374 residues: DNA-directed RNA polymerase subunit beta' (1374 aa).

The disordered stretch occupies residues 1–47 (MTSTSPKSRKPSTKTTKSKSKSKSKSKAAKAAAASASPALARTPPQF). Over residues 7-28 (KSRKPSTKTTKSKSKSKSKSKA) the composition is skewed to basic residues. The segment covering 29–45 (AKAAAASASPALARTPP) has biased composition (low complexity). Zn(2+) is bound by residues C258, C325, C332, and C335. The tract at residues 1343 to 1374 (VRPTGENELEEEQLPDPSALEGLQQEGLLTEE) is disordered. The span at 1362–1374 (LEGLQQEGLLTEE) shows a compositional bias: low complexity.

It belongs to the RNA polymerase beta' chain family. RpoC2 subfamily. In terms of assembly, in cyanobacteria the RNAP catalytic core is composed of 2 alpha, 1 beta, 1 beta', 1 gamma and 1 omega subunit. When a sigma factor is associated with the core the holoenzyme is formed, which can initiate transcription. It depends on Zn(2+) as a cofactor.

The enzyme catalyses RNA(n) + a ribonucleoside 5'-triphosphate = RNA(n+1) + diphosphate. In terms of biological role, DNA-dependent RNA polymerase catalyzes the transcription of DNA into RNA using the four ribonucleoside triphosphates as substrates. The polypeptide is DNA-directed RNA polymerase subunit beta' (Prochlorococcus marinus (strain MIT 9303)).